The primary structure comprises 346 residues: Protein farnesyltransferase/geranylgeranyltransferase type-1 subunit alpha (346 aa).

PFTA repeat units follow at residues 59–93 (RSTR…ALGV), 94–128 (DLRE…KLGA), 130–164 (AVTN…ALGG), 165–198 (WEDE…RSPL), and 205–239 (MREL…NDTQ).

It belongs to the protein prenyltransferase subunit alpha family. As to quaternary structure, heterodimer of an alpha and a beta subunit. Requires Mg(2+) as cofactor.

The catalysed reaction is L-cysteinyl-[protein] + (2E,6E)-farnesyl diphosphate = S-(2E,6E)-farnesyl-L-cysteinyl-[protein] + diphosphate. It carries out the reaction geranylgeranyl diphosphate + L-cysteinyl-[protein] = S-geranylgeranyl-L-cysteinyl-[protein] + diphosphate. Its function is as follows. Essential subunit of both the farnesyltransferase and the geranylgeranyltransferase complex. Contributes to the transfer of a farnesyl or geranylgeranyl moiety from farnesyl or geranylgeranyl diphosphate to a cysteine at the fourth position from the C-terminus of several proteins having the C-terminal sequence Cys-aliphatic-aliphatic-X. This is Protein farnesyltransferase/geranylgeranyltransferase type-1 subunit alpha (FTA) from Solanum lycopersicum (Tomato).